The chain runs to 232 residues: Phosphatidylserine decarboxylase proenzyme (232 aa).

The active-site Schiff-base intermediate with substrate; via pyruvic acid is S190. S190 bears the Pyruvic acid (Ser); by autocatalysis mark.

This sequence belongs to the phosphatidylserine decarboxylase family. PSD-A subfamily. Heterodimer of a large membrane-associated beta subunit and a small pyruvoyl-containing alpha subunit. It depends on pyruvate as a cofactor. In terms of processing, is synthesized initially as an inactive proenzyme. Formation of the active enzyme involves a self-maturation process in which the active site pyruvoyl group is generated from an internal serine residue via an autocatalytic post-translational modification. Two non-identical subunits are generated from the proenzyme in this reaction, and the pyruvate is formed at the N-terminus of the alpha chain, which is derived from the carboxyl end of the proenzyme. The post-translation cleavage follows an unusual pathway, termed non-hydrolytic serinolysis, in which the side chain hydroxyl group of the serine supplies its oxygen atom to form the C-terminus of the beta chain, while the remainder of the serine residue undergoes an oxidative deamination to produce ammonia and the pyruvoyl prosthetic group on the alpha chain.

Its subcellular location is the cell membrane. It catalyses the reaction a 1,2-diacyl-sn-glycero-3-phospho-L-serine + H(+) = a 1,2-diacyl-sn-glycero-3-phosphoethanolamine + CO2. It functions in the pathway phospholipid metabolism; phosphatidylethanolamine biosynthesis; phosphatidylethanolamine from CDP-diacylglycerol: step 2/2. Its function is as follows. Catalyzes the formation of phosphatidylethanolamine (PtdEtn) from phosphatidylserine (PtdSer). The sequence is that of Phosphatidylserine decarboxylase proenzyme from Bradyrhizobium sp. (strain BTAi1 / ATCC BAA-1182).